A 64-amino-acid chain; its full sequence is Large ribosomal subunit protein bL33 (64 aa).

This sequence belongs to the bacterial ribosomal protein bL33 family.

The chain is Large ribosomal subunit protein bL33 from Synechococcus sp. (strain JA-3-3Ab) (Cyanobacteria bacterium Yellowstone A-Prime).